We begin with the raw amino-acid sequence, 323 residues long: Serine/threonine-protein phosphatase PP1 (323 aa).

The Mn(2+) site is built by Asp-63, His-65, Asp-91, and Asn-123. His-124 serves as the catalytic Proton donor. 2 residues coordinate Mn(2+): His-172 and His-247.

Belongs to the PPP phosphatase family. PP-1 subfamily. It depends on Mn(2+) as a cofactor.

The enzyme catalyses O-phospho-L-seryl-[protein] + H2O = L-seryl-[protein] + phosphate. It carries out the reaction O-phospho-L-threonyl-[protein] + H2O = L-threonyl-[protein] + phosphate. Functionally, plays an important role in the control of mitosis by reversing the action of the nimA kinase. The chain is Serine/threonine-protein phosphatase PP1 (bimG) from Emericella nidulans (strain FGSC A4 / ATCC 38163 / CBS 112.46 / NRRL 194 / M139) (Aspergillus nidulans).